We begin with the raw amino-acid sequence, 59 residues long: Lantipeptide Flvbeta.f (59 aa).

Positions 1–27 (MEKMNNIAGITPENELDEMFDDSVVGA) are cleaved as a propeptide — cleaved by FlvT. 2,3-didehydrobutyrine; by FlvM2 is present on residues T31 and T32. 2 cross-links (beta-methyllanthionine (Thr-Cys); by FlvM2) span residues 41-47 (TKNPQIC) and 53-56 (TVKC).

Contains DL-beta-methyllanthionine, when coepressed in E.coli with the flavecin synthetase FlvM2.

It localises to the secreted. In terms of biological role, lanthionine-containing peptide that does probably not show antibacterial activity, since its analog [+7]Flvbeta.f does not show antibacterial activity against M.luteus. Also does not show antibiotic activity when tested with [Del2]Flvalpha.a, an analog of Flvalpha.a, which is encoded by the same operon than Flvbeta.f. The bactericidal activity of lantibiotics is based on depolarization of energized bacterial cytoplasmic membranes, initiated by the formation of aqueous transmembrane pores. This Ruminococcus flavefaciens protein is Lantipeptide Flvbeta.f.